The following is a 1048-amino-acid chain: Probable histidine kinase 2 (1048 aa).

The Cytoplasmic segment spans residues 1-16 (MREVEEVSKWRRRCCY). The helical transmembrane segment at 17–37 (FWILFPLAVIATCMTITVVTF) threads the bilayer. The Extracellular portion of the chain corresponds to 38-336 (CSSTMYMTEV…AMVGVFRRGG (299 aa)). A helical membrane pass occupies residues 337-357 (VTMVAVACAAAAAATVACVLM). The Cytoplasmic segment spans residues 358-1048 (ARALRRAVAR…AVHGVCKGKN (691 aa)). Residues 398-662 (SASHDIRSAL…CFGFNVLLKT (265 aa)) enclose the Histidine kinase domain. His-401 is modified (phosphohistidine; by autocatalysis). A Response regulatory domain is found at 912–1044 (HVLLVEDTLV…RIVEAVHGVC (133 aa)). Position 975 is a 4-aspartylphosphate (Asp-975).

In terms of processing, activation probably requires a transfer of a phosphate group between a His in the transmitter domain and an Asp of the receiver domain.

Its subcellular location is the cell membrane. The catalysed reaction is ATP + protein L-histidine = ADP + protein N-phospho-L-histidine.. Cytokinin receptor related to bacterial two-component regulators. Functions as a histidine kinase and transmits the stress signal to a downstream MAPK cascade. This is Probable histidine kinase 2 from Oryza sativa subsp. indica (Rice).